The chain runs to 613 residues: Kelch-like protein 36 (613 aa).

Residues 45 to 112 (CDVVLVVEEQ…LYSSELELDG (68 aa)) enclose the BTB domain. Positions 147 to 249 (YLYLQELASI…PEDILLQRVK (103 aa)) constitute a BACK domain. Kelch repeat units lie at residues 294–343 (CLLF…VLGG), 344–395 (FIFI…SIED), 396–442 (MLVA…IYKD), 444–491 (VYIS…SLGD), 492–544 (SIYS…VWQG), and 545–593 (RIYI…VCAL).

Interacts with CUL3.

The protein operates within protein modification; protein ubiquitination. Its function is as follows. Probable substrate-specific adapter of an E3 ubiquitin-protein ligase complex which mediates the ubiquitination and subsequent proteasomal degradation of target proteins. The polypeptide is Kelch-like protein 36 (Klhl36) (Mus musculus (Mouse)).